We begin with the raw amino-acid sequence, 138 residues long: Large ribosomal subunit protein bL17 (138 aa).

The segment at 118–138 (RDEDAKGKDSGPSQDGAAEAA) is disordered.

It belongs to the bacterial ribosomal protein bL17 family. Part of the 50S ribosomal subunit. Contacts protein L32.

The chain is Large ribosomal subunit protein bL17 from Rhodopseudomonas palustris (strain HaA2).